The sequence spans 375 residues: CC-adding tRNA nucleotidyltransferase (375 aa).

Residue 27–30 coordinates CTP; the sequence is GAVR. Mg(2+)-binding residues include Asp40 and Asp42. Residues 95–96, Asn100, 137–146, and Arg177 contribute to the CTP site; these read RD and DPLRMLRAPR.

Belongs to the tRNA nucleotidyltransferase/poly(A) polymerase family. Mg(2+) is required as a cofactor.

The enzyme catalyses a tRNA precursor + 2 CTP = a tRNA with a 3' CC end + 2 diphosphate. TRNA nucleotidyltransferase involved in the synthesis of the tRNA CCA terminus. Adds the two cytidine residues to tRNA. The protein is CC-adding tRNA nucleotidyltransferase of Halalkalibacterium halodurans (strain ATCC BAA-125 / DSM 18197 / FERM 7344 / JCM 9153 / C-125) (Bacillus halodurans).